The sequence spans 43 residues: Protein PsbN (43 aa).

A helical membrane pass occupies residues 4-24; sequence GILIVIFISCLLVSFTGYAVY.

Belongs to the PsbN family.

The protein localises to the plastid. The protein resides in the chloroplast thylakoid membrane. May play a role in photosystem I and II biogenesis. The chain is Protein PsbN from Coleochaete orbicularis (Charophycean green alga).